The chain runs to 168 residues: uncharacterized protein (168 aa).

This is an uncharacterized protein from Escherichia coli (strain K12).